Consider the following 179-residue polypeptide: ATP synthase subunit delta (179 aa).

The protein belongs to the ATPase delta chain family. In terms of assembly, F-type ATPases have 2 components, F(1) - the catalytic core - and F(0) - the membrane proton channel. F(1) has five subunits: alpha(3), beta(3), gamma(1), delta(1), epsilon(1). F(0) has three main subunits: a(1), b(2) and c(10-14). The alpha and beta chains form an alternating ring which encloses part of the gamma chain. F(1) is attached to F(0) by a central stalk formed by the gamma and epsilon chains, while a peripheral stalk is formed by the delta and b chains.

It is found in the cell inner membrane. In terms of biological role, f(1)F(0) ATP synthase produces ATP from ADP in the presence of a proton or sodium gradient. F-type ATPases consist of two structural domains, F(1) containing the extramembraneous catalytic core and F(0) containing the membrane proton channel, linked together by a central stalk and a peripheral stalk. During catalysis, ATP synthesis in the catalytic domain of F(1) is coupled via a rotary mechanism of the central stalk subunits to proton translocation. This protein is part of the stalk that links CF(0) to CF(1). It either transmits conformational changes from CF(0) to CF(1) or is implicated in proton conduction. In Burkholderia mallei (strain NCTC 10247), this protein is ATP synthase subunit delta.